Here is a 433-residue protein sequence, read N- to C-terminus: Oxaloacetate decarboxylase beta chain 2 (433 aa).

10 helical membrane passes run 16–36, 42–62, 122–142, 168–188, 190–210, 216–236, 266–286, 311–331, 340–360, and 413–433; these read LGAG…LAIA, LLLL…AGMA, VLAL…VIFM, FGIF…LIAF, LPQA…AIYL, PELL…VPLI, ILFP…AAPL, NGLI…KLVA, LGIL…GVLM, and VAGV…VLAM.

It belongs to the GcdB/MmdB/OadB family. Heterotrimer of an alpha, a beta and a gamma subunit. It depends on Na(+) as a cofactor.

Its subcellular location is the cell membrane. The catalysed reaction is oxaloacetate + 2 Na(+)(in) + H(+) = pyruvate + 2 Na(+)(out) + CO2. In terms of biological role, catalyzes the decarboxylation of oxaloacetate coupled to Na(+) translocation. In Salmonella typhi, this protein is Oxaloacetate decarboxylase beta chain 2 (oadB2).